Consider the following 694-residue polypeptide: Elongation factor G (694 aa).

The tr-type G domain occupies 8–287 (EDYRNFGIMA…AVVEFLPAPT (280 aa)). GTP contacts are provided by residues 17-24 (AHIDAGKT), 86-90 (DTPGH), and 140-143 (NKMD).

Belongs to the TRAFAC class translation factor GTPase superfamily. Classic translation factor GTPase family. EF-G/EF-2 subfamily.

The protein localises to the cytoplasm. Its function is as follows. Catalyzes the GTP-dependent ribosomal translocation step during translation elongation. During this step, the ribosome changes from the pre-translocational (PRE) to the post-translocational (POST) state as the newly formed A-site-bound peptidyl-tRNA and P-site-bound deacylated tRNA move to the P and E sites, respectively. Catalyzes the coordinated movement of the two tRNA molecules, the mRNA and conformational changes in the ribosome. This is Elongation factor G from Brucella ovis (strain ATCC 25840 / 63/290 / NCTC 10512).